The primary structure comprises 508 residues: Light-independent protochlorophyllide reductase subunit B (508 aa).

[4Fe-4S] cluster is bound at residue aspartate 36. Aspartate 294 acts as the Proton donor in catalysis. Position 429–430 (429–430) interacts with substrate; that stretch reads GM.

It belongs to the ChlB/BchB/BchZ family. As to quaternary structure, protochlorophyllide reductase is composed of three subunits; ChlL, ChlN and ChlB. Forms a heterotetramer of two ChlB and two ChlN subunits. The cofactor is [4Fe-4S] cluster.

The enzyme catalyses chlorophyllide a + oxidized 2[4Fe-4S]-[ferredoxin] + 2 ADP + 2 phosphate = protochlorophyllide a + reduced 2[4Fe-4S]-[ferredoxin] + 2 ATP + 2 H2O. It participates in porphyrin-containing compound metabolism; chlorophyll biosynthesis (light-independent). Component of the dark-operative protochlorophyllide reductase (DPOR) that uses Mg-ATP and reduced ferredoxin to reduce ring D of protochlorophyllide (Pchlide) to form chlorophyllide a (Chlide). This reaction is light-independent. The NB-protein (ChlN-ChlB) is the catalytic component of the complex. The protein is Light-independent protochlorophyllide reductase subunit B of Crocosphaera subtropica (strain ATCC 51142 / BH68) (Cyanothece sp. (strain ATCC 51142)).